The chain runs to 127 residues: Aspartate 1-decarboxylase (127 aa).

Ser25 acts as the Schiff-base intermediate with substrate; via pyruvic acid in catalysis. Ser25 is modified (pyruvic acid (Ser)). Residue Thr57 coordinates substrate. Residue Tyr58 is the Proton donor of the active site. Residue 73 to 75 (GAA) coordinates substrate.

The protein belongs to the PanD family. Heterooctamer of four alpha and four beta subunits. It depends on pyruvate as a cofactor. Is synthesized initially as an inactive proenzyme, which is activated by self-cleavage at a specific serine bond to produce a beta-subunit with a hydroxyl group at its C-terminus and an alpha-subunit with a pyruvoyl group at its N-terminus.

It localises to the cytoplasm. The catalysed reaction is L-aspartate + H(+) = beta-alanine + CO2. It functions in the pathway cofactor biosynthesis; (R)-pantothenate biosynthesis; beta-alanine from L-aspartate: step 1/1. In terms of biological role, catalyzes the pyruvoyl-dependent decarboxylation of aspartate to produce beta-alanine. The polypeptide is Aspartate 1-decarboxylase (Shouchella clausii (strain KSM-K16) (Alkalihalobacillus clausii)).